Reading from the N-terminus, the 35-residue chain is Photosystem II reaction center protein M (35 aa).

A helical transmembrane segment spans residues 5 to 25; it reads ILAVIATALFIIIPTSFLLIL.

Belongs to the PsbM family. In terms of assembly, PSII is composed of 1 copy each of membrane proteins PsbA, PsbB, PsbC, PsbD, PsbE, PsbF, PsbH, PsbI, PsbJ, PsbK, PsbL, PsbM, PsbT, PsbX, PsbY, PsbZ, Psb30/Ycf12, at least 3 peripheral proteins of the oxygen-evolving complex and a large number of cofactors. It forms dimeric complexes.

Its subcellular location is the plastid. It is found in the chloroplast thylakoid membrane. One of the components of the core complex of photosystem II (PSII). PSII is a light-driven water:plastoquinone oxidoreductase that uses light energy to abstract electrons from H(2)O, generating O(2) and a proton gradient subsequently used for ATP formation. It consists of a core antenna complex that captures photons, and an electron transfer chain that converts photonic excitation into a charge separation. This subunit is found at the monomer-monomer interface. This is Photosystem II reaction center protein M from Staurastrum punctulatum (Green alga).